The primary structure comprises 1047 residues: Atrial natriuretic peptide receptor 2 (1047 aa).

Residues 1–16 (MALPSLLLVVAALAGG) form the signal peptide. Residues 17 to 458 (VRPPGARNLT…DKTPLSTLAI (442 aa)) are Extracellular-facing. N-linked (GlcNAc...) asparagine glycans are attached at residues N24 and N35. A disulfide bridge links C75 with C101. Residues N161, N195, N244, N277, and N349 are each glycosylated (N-linked (GlcNAc...) asparagine). Residues 459 to 478 (VALGTGITFIMFGVSSFLIF) traverse the membrane as a helical segment. Topologically, residues 479 to 1047 (RKLMLEKELA…GERKGPAGLL (569 aa)) are cytoplasmic. At S513 the chain carries Phosphoserine. Positions 513–786 (SRLTLSLRGS…PDFGQIKGFI (274 aa)) constitute a Protein kinase domain. T516 bears the Phosphothreonine mark. Residues S518, S522, S523, and S526 each carry the phosphoserine modification. T529 is modified (phosphothreonine). The region spanning 861–991 (TIYFSDIVGF…DTVNTASRME (131 aa)) is the Guanylate cyclase domain.

Belongs to the adenylyl cyclase class-4/guanylyl cyclase family. In terms of processing, phosphorylated. Phosphorylation of the protein kinase-like domain is required for full activation by CNP. Glycosylated.

It localises to the cell membrane. It carries out the reaction GTP = 3',5'-cyclic GMP + diphosphate. Receptor for the C-type natriuretic peptide NPPC/CNP hormone. Has guanylate cyclase activity upon binding of its ligand. May play a role in the regulation of skeletal growth. In Bos taurus (Bovine), this protein is Atrial natriuretic peptide receptor 2 (NPR2).